The primary structure comprises 921 residues: Alanine--tRNA ligase (921 aa).

Zn(2+)-binding residues include H602, H606, C706, and H710.

Belongs to the class-II aminoacyl-tRNA synthetase family. It depends on Zn(2+) as a cofactor.

The protein localises to the cytoplasm. It carries out the reaction tRNA(Ala) + L-alanine + ATP = L-alanyl-tRNA(Ala) + AMP + diphosphate. In terms of biological role, catalyzes the attachment of alanine to tRNA(Ala) in a two-step reaction: alanine is first activated by ATP to form Ala-AMP and then transferred to the acceptor end of tRNA(Ala). Also edits incorrectly charged Ser-tRNA(Ala) and Gly-tRNA(Ala) via its editing domain. The protein is Alanine--tRNA ligase of Hyperthermus butylicus (strain DSM 5456 / JCM 9403 / PLM1-5).